The chain runs to 86 residues: Superoxide dismutase [Cu-Zn] (86 aa).

Positions 1-26 are disordered; that stretch reads AKEKGGKLTAGLAAGGHWNPNKAPHH. The segment covering 7-16 has biased composition (low complexity); the sequence is KLTAGLAAGG. His17 contacts Cu cation. Positions 17, 26, 35, and 38 each coordinate Zn(2+). His73 provides a ligand contact to Cu cation.

It belongs to the Cu-Zn superoxide dismutase family. As to quaternary structure, homodimer. Cu cation is required as a cofactor. Requires Zn(2+) as cofactor.

Its subcellular location is the periplasm. It catalyses the reaction 2 superoxide + 2 H(+) = H2O2 + O2. Its function is as follows. Destroys radicals which are normally produced within the cells and which are toxic to biological systems. The protein is Superoxide dismutase [Cu-Zn] (sodC) of Mannheimia haemolytica (Pasteurella haemolytica).